We begin with the raw amino-acid sequence, 85 residues long: Hepcidin (85 aa).

A signal peptide spans 1–24; the sequence is MKTFSVAVAVAVVLAFICLQESSA. The propeptide occupies 25–64; the sequence is VPVTEVQELEEPMSNEYQEMPVESWKMPYNNRHKRHSSPG. 4 cysteine pairs are disulfide-bonded: Cys-66–Cys-83, Cys-69–Cys-72, Cys-70–Cys-79, and Cys-73–Cys-82.

As to expression, predominantly expressed in liver.

It is found in the secreted. Seems to act as a signaling molecule involved in the maintenance of iron homeostasis. Seems to be required in conjunction with HFE to regulate both intestinal iron absorption and iron storage in macrophages. In terms of biological role, antimicrobial activity against Gram-negative bacteria such as E.coli. This Morone chrysops x Morone saxatilis (White bass x Striped bass) protein is Hepcidin (hamp).